The sequence spans 227 residues: uncharacterized protein (227 aa).

The RCK N-terminal domain maps to 3–119 (RADFCIIGLG…STMGIREALI (117 aa)). An RCK C-terminal domain is found at 134–221 (HGLENEIINL…LNKYLNYINP (88 aa)).

This is an uncharacterized protein from Mycoplasma genitalium (strain ATCC 33530 / DSM 19775 / NCTC 10195 / G37) (Mycoplasmoides genitalium).